The primary structure comprises 348 residues: MHSVFSYLNESLILFLVTVMGFAFLVGIFLGKPVIHWLKKQNYYDQVQKEHCAKLETLHKDKKYTPTAGGVLFFLVLLMSIFFLLPLRKPSTWLFVFSIVSWGSLGWYDDIVKKKRKKGHGITAKQKFIVQLLLSAVTVITVFFIDKENSLFCTLQVPFFRTIFLGSSILAKLFCFSLAMLAIIGTSNAVNLTDGLDGLATGITCMSSFGLLIVAIMSPTNPLAYDVSIVLATLVGISLAFLRYNCSPAQVFMGDTGSLLIGGILASCAVMLRAELFLIFLGGVFVAEAGSVILQVASCRLRKKRIFLCSPLHHHYEYKGIPETQVVARFWMAGLLCTVLGIVAALWR.

Helical transmembrane passes span 11-31 (SLILFLVTVMGFAFLVGIFLG), 67-87 (TAGGVLFFLVLLMSIFFLLPL), 92-112 (TWLFVFSIVSWGSLGWYDDIV), 128-148 (FIVQLLLSAVTVITVFFIDKE), 163-183 (IFLGSSILAKLFCFSLAMLAI), 198-218 (GLATGITCMSSFGLLIVAIMS), 222-242 (PLAYDVSIVLATLVGISLAFL), 251-271 (VFMGDTGSLLIGGILASCAVM), 276-296 (LFLIFLGGVFVAEAGSVILQV), and 326-346 (VVARFWMAGLLCTVLGIVAAL).

Belongs to the glycosyltransferase 4 family. MraY subfamily. Mg(2+) is required as a cofactor.

It is found in the cell inner membrane. The enzyme catalyses UDP-N-acetyl-alpha-D-muramoyl-L-alanyl-gamma-D-glutamyl-meso-2,6-diaminopimeloyl-D-alanyl-D-alanine + di-trans,octa-cis-undecaprenyl phosphate = di-trans,octa-cis-undecaprenyl diphospho-N-acetyl-alpha-D-muramoyl-L-alanyl-D-glutamyl-meso-2,6-diaminopimeloyl-D-alanyl-D-alanine + UMP. It participates in cell wall biogenesis; peptidoglycan biosynthesis. Its function is as follows. Catalyzes the initial step of the lipid cycle reactions in the biosynthesis of the cell wall peptidoglycan: transfers peptidoglycan precursor phospho-MurNAc-pentapeptide from UDP-MurNAc-pentapeptide onto the lipid carrier undecaprenyl phosphate, yielding undecaprenyl-pyrophosphoryl-MurNAc-pentapeptide, known as lipid I. The protein is Phospho-N-acetylmuramoyl-pentapeptide-transferase of Chlamydia felis (strain Fe/C-56) (Chlamydophila felis).